Here is an 862-residue protein sequence, read N- to C-terminus: Molybdenum cofactor sulfurase (862 aa).

Position 34 is a phosphoserine (S34). K264 is modified (N6-(pyridoxal phosphate)lysine). C424 is an active-site residue. S517 is subject to Phosphoserine. Residues R704–V855 enclose the MOSC domain.

Belongs to the class-V pyridoxal-phosphate-dependent aminotransferase family. MOCOS subfamily. Pyridoxal 5'-phosphate serves as cofactor.

The enzyme catalyses Mo-molybdopterin + L-cysteine + AH2 = thio-Mo-molybdopterin + L-alanine + A + H2O. It functions in the pathway cofactor biosynthesis; molybdopterin biosynthesis. In terms of biological role, sulfurates the molybdenum cofactor. Sulfation of molybdenum is essential for xanthine dehydrogenase (XDH) and aldehyde oxidase (ADO) enzymes in which molybdenum cofactor is liganded by 1 oxygen and 1 sulfur atom in active form. The chain is Molybdenum cofactor sulfurase (Mocos) from Mus musculus (Mouse).